A 345-amino-acid polypeptide reads, in one-letter code: Biotin synthase (345 aa).

Residues 60–287 (NQVQLSTLLS…RTMVRLSAGR (228 aa)) form the Radical SAM core domain. Residues Cys-75, Cys-79, and Cys-82 each coordinate [4Fe-4S] cluster. Residues Cys-119, Cys-150, Cys-210, and Arg-282 each coordinate [2Fe-2S] cluster.

This sequence belongs to the radical SAM superfamily. Biotin synthase family. As to quaternary structure, homodimer. The cofactor is [4Fe-4S] cluster. [2Fe-2S] cluster serves as cofactor.

The enzyme catalyses (4R,5S)-dethiobiotin + (sulfur carrier)-SH + 2 reduced [2Fe-2S]-[ferredoxin] + 2 S-adenosyl-L-methionine = (sulfur carrier)-H + biotin + 2 5'-deoxyadenosine + 2 L-methionine + 2 oxidized [2Fe-2S]-[ferredoxin]. Its pathway is cofactor biosynthesis; biotin biosynthesis; biotin from 7,8-diaminononanoate: step 2/2. Functionally, catalyzes the conversion of dethiobiotin (DTB) to biotin by the insertion of a sulfur atom into dethiobiotin via a radical-based mechanism. This Polaromonas naphthalenivorans (strain CJ2) protein is Biotin synthase.